The sequence spans 129 residues: Glycine cleavage system H protein (129 aa).

Residues 24 to 106 (SYTVGITEHA…YGDGWFFRIM (83 aa)) enclose the Lipoyl-binding domain. Lys65 is modified (N6-lipoyllysine).

Belongs to the GcvH family. The glycine cleavage system is composed of four proteins: P, T, L and H. It depends on (R)-lipoate as a cofactor.

Its function is as follows. The glycine cleavage system catalyzes the degradation of glycine. The H protein shuttles the methylamine group of glycine from the P protein to the T protein. The chain is Glycine cleavage system H protein from Shewanella denitrificans (strain OS217 / ATCC BAA-1090 / DSM 15013).